Reading from the N-terminus, the 171-residue chain is Serine acetyltransferase (171 aa).

The protein belongs to the transferase hexapeptide repeat family.

The protein localises to the cytoplasm. It catalyses the reaction L-serine + acetyl-CoA = O-acetyl-L-serine + CoA. It functions in the pathway amino-acid biosynthesis; L-cysteine biosynthesis; L-cysteine from L-serine: step 1/2. This chain is Serine acetyltransferase (cysE), found in Helicobacter pylori (strain J99 / ATCC 700824) (Campylobacter pylori J99).